The following is a 1245-amino-acid chain: Structural polyprotein (1245 aa).

The tract at residues 1-106 (MNRGFFNMLG…KTKPGKRQRM (106 aa)) is disordered. Residues 37-70 (GLASQIQQLTTAVSALVIGQATRPQNPRPRPPPR) are host transcription inhibition. A compositionally biased stretch (polar residues) spans 38 to 49 (LASQIQQLTTAV). Positions 63-100 (PRPRPPPRQKKQAPKQPPKPKKPKPQEKKKKQPAKTKP) match the Nuclear localization signal motif. Basic residues predominate over residues 67 to 106 (PPPRQKKQAPKQPPKPKKPKPQEKKKKQPAKTKPGKRQRM). The segment at 86-115 (KPQEKKKKQPAKTKPGKRQRMALKLEADRL) is binding to the viral RNA. Residues 100-114 (PGKRQRMALKLEADR) form a ribosome-binding region. The region spanning 114–264 (RLFDVKNEDG…KTTPEGTEEW (151 aa)) is the Peptidase S3 domain. H141 (charge relay system) is an active-site residue. Residues 146 to 156 (IDHPVLSKLKF) carry the Nuclear export signal motif. Residues 157 to 162 (TKSSAY) form an interaction with spike glycoprotein E2 region. Catalysis depends on D163, which acts as the Charge relay system. Residues 185 to 195 (PEGFYNWHHGA) are dimerization of the capsid protein. S215 acts as the Charge relay system in catalysis. The interval 221–225 (DNSGR) is dimerization of the capsid protein. The tract at residues 249–253 (SKGKT) is interaction with spike glycoprotein E2. The functions as an uncleaved signal peptide for the precursor of protein E3/E2 stretch occupies residues 265 to 279 (SAAPLVTAMCLLGNV). N278 carries an N-linked (GlcNAc...) asparagine; by host glycan. Disulfide bonds link C283/C289, C480/C594, C529/C554, and C531/C548. Residues 329–690 (SVTDDFTLTS…HEIVQHYYHR (362 aa)) lie on the Extracellular side of the membrane. The N-linked (GlcNAc...) asparagine; by host glycan is linked to N524. N646 carries N-linked (GlcNAc...) asparagine; by host glycosylation. Residues 691-718 (HPVYTILAVASAAVAMMIGVTVAALCAC) form a helical membrane-spanning segment. The segment at 719–723 (KARRE) is interaction with the capsid protein. At 719 to 751 (KARRECLTPYALAPNAVIPTSLALLCCVRSANA) the chain is on the cytoplasmic side. Residues C724, C744, and C745 are each lipidated (S-palmitoyl cysteine; by host). Cysteines 724 and 745 form a disulfide. Residues 752 to 763 (ETFTETMSYFWS) are Extracellular-facing. The helical transmembrane segment at 764-784 (NSQPFFWVQLCIPLAAVIVLM) threads the bilayer. Position 785 (R785) is a topological domain, cytoplasmic. The chain crosses the membrane as a helical span at residues 786-806 (CCSCCLPFLVVAGAYLAKVDA). The Extracellular portion of the chain corresponds to 807–1214 (YEHATTVPNV…QAAISKTSWS (408 aa)). 4 cysteine pairs are disulfide-bonded: C855–C920, C868–C900, C869–C902, and C874–C884. An E1 fusion peptide loop region spans residues 890–907 (VYPFMWGGAQCFCDSENS). N-linked (GlcNAc...) asparagine; by host glycans are attached at residues N945 and N1051. 4 disulfides stabilise this stretch: C1065/C1077, C1107/C1182, C1112/C1186, and C1134/C1176. The helical transmembrane segment at 1215 to 1239 (WLFALFGGASSLLIIGLTIFACSMM) threads the bilayer. Residues 1240–1245 (LTSTRR) are Cytoplasmic-facing.

Homodimer. Homomultimer. Interacts with host karyopherin KPNA4; this interaction allows the nuclear import of the viral capsid protein. Interacts with spike glycoprotein E2. Interacts with host IRAK1; the interaction leads to inhibition of IRAK1-dependent signaling. In terms of assembly, the precursor of protein E3/E2 and E1 form a heterodimer shortly after synthesis. As to quaternary structure, the precursor of protein E3/E2 and E1 form a heterodimer shortly after synthesis. Processing of the precursor of protein E3/E2 into E2 and E3 results in a heterodimer of the spike glycoproteins E2 and E1. Spike at virion surface are constituted of a trimer of E2-E1 heterodimers. After target cell attachment and endocytosis, E1 change conformation to form homotrimers. E2-E1 heterodimers interact with host VLDLR or LRP8/APOER2 to mediate viral entry. Interacts with 6K protein. Processing of the precursor of protein E3/E2 into E2 and E3 results in a heterodimer of the spike glycoproteins E2 and E1. Spike at virion surface are constituted of a trimer of E2-E1 heterodimers. E2-E1 heterodimers interact with host VLDLR or LRP8/APOER2 to mediate viral entry. Interacts with 6K protein. Interacts with the capsid protein. In terms of assembly, oligomer. Interacts with spike glycoprotein E1. Interacts with spike glycoprotein E2. In terms of processing, structural polyprotein: Specific enzymatic cleavages in vivo yield mature proteins. Capsid protein is auto-cleaved during polyprotein translation, unmasking a signal peptide at the N-terminus of the precursor of E3/E2. The remaining polyprotein is then targeted to the host endoplasmic reticulum, where host signal peptidase cleaves it into pE2, 6K and E1 proteins. pE2 is further processed to mature E3 and E2 by host furin in trans-Golgi vesicle. Post-translationally, palmitoylated via thioester bonds. These palmitoylations may induce disruption of the C-terminus transmembrane. This would result in the reorientation of E2 C-terminus from lumenal to cytoplasmic side. N-glycosylated. In terms of processing, palmitoylated via thioester bonds.

It is found in the virion. It localises to the host cytoplasm. Its subcellular location is the host cell membrane. The protein resides in the host nucleus. The protein localises to the virion membrane. It is found in the host Golgi apparatus. It localises to the host trans-Golgi network. Its subcellular location is the host endoplasmic reticulum. It carries out the reaction Autocatalytic release of the core protein from the N-terminus of the togavirus structural polyprotein by hydrolysis of a -Trp-|-Ser- bond.. In terms of biological role, forms an icosahedral capsid with a T=4 symmetry composed of 240 copies of the capsid protein surrounded by a lipid membrane through which penetrate 80 spikes composed of trimers of E1-E2 heterodimers. The capsid protein binds to the viral RNA genome at a site adjacent to a ribosome binding site for viral genome translation following genome release. Possesses a protease activity that results in its autocatalytic cleavage from the nascent structural protein. Following its self-cleavage, the capsid protein transiently associates with ribosomes, and within several minutes the protein binds to viral RNA and rapidly assembles into icosahedric core particles. The resulting nucleocapsid eventually associates with the cytoplasmic domain of the spike glycoprotein E2 at the cell membrane, leading to budding and formation of mature virions. In case of infection, new virions attach to target cells and after clathrin-mediated endocytosis their membrane fuses with the host endosomal membrane. This leads to the release of the nucleocapsid into the cytoplasm, followed by an uncoating event necessary for the genomic RNA to become accessible. The uncoating might be triggered by the interaction of capsid proteins with ribosomes. Binding of ribosomes would release the genomic RNA since the same region is genomic RNA-binding and ribosome-binding. Specifically inhibits interleukin-1 receptor-associated kinase 1/IRAK1-dependent signaling during viral entry, representing a means by which the alphaviruses may evade innate immune detection and activation prior to viral gene expression. Functionally, provides the signal sequence for the translocation of the precursor of protein E3/E2 to the host endoplasmic reticulum. Furin-cleaved E3 remains associated with spike glycoprotein E1 and mediates pH protection of the latter during the transport via the secretory pathway. After virion release from the host cell, the assembly protein E3 is gradually released in the extracellular space. Its function is as follows. Plays a role in viral attachment to target host cell, by binding to the cell receptors VLDLR or LRP8/APOER2. Synthesized as a pE2 precursor which is processed by furin at the cell membrane just before virion budding, giving rise to E2-E1 heterodimer. The pE2-E1 heterodimer is stable, whereas E2-E1 is unstable and dissociate at low pH. pE2 is processed at the last step, presumably to avoid E1 fusion activation before its final export to cell surface. E2 C-terminus contains a transitory transmembrane that would be disrupted by palmitoylation, resulting in reorientation of the C-terminal tail from lumenal to cytoplasmic side. This step is critical since E2 C-terminus is involved in budding by interacting with capsid proteins. This release of E2 C-terminus in cytoplasm occurs lately in protein export, and precludes premature assembly of particles at the endoplasmic reticulum membrane. Acts as a viroporin that participates in virus glycoprotein processing and transport to the plasma membrane, cell permeabilization and budding of viral particles. Disrupts the calcium homeostasis of the cell, probably at the endoplasmic reticulum level resulting in the increased levels of cytoplasmic calcium. Because of its lipophilic properties, the 6K protein is postulated to influence the selection of lipids that interact with the transmembrane domains of the glycoproteins, which, in turn, affects the deformability of the bilayer required for the extreme curvature that occurs as budding proceeds. Present in low amount in virions, about 3% compared to viral glycoproteins. In terms of biological role, class II viral fusion protein. Fusion activity is inactive as long as E1 is bound to E2 in mature virion. After virus attachment to target cell via host VLDLR or LRP8/APOER2 and endocytosis, acidification of the endosome induces dissociation of E1/E2 heterodimer and concomitant trimerization of the E1 subunits. This E1 trimer is fusion active, and promotes release of viral nucleocapsid in cytoplasm after endosome and viral membrane fusion. Efficient fusion requires the presence of cholesterol and sphingolipid in the target membrane. The protein is Structural polyprotein of Acrocephalus scirpaceus (Eurasian reed-warbler).